The primary structure comprises 379 residues: Glucose-1-phosphate adenylyltransferase (379 aa).

Alpha-D-glucose 1-phosphate-binding positions include Tyr99, Gly164, 179-180 (EK), and Ser190.

This sequence belongs to the bacterial/plant glucose-1-phosphate adenylyltransferase family. In terms of assembly, homotetramer.

The catalysed reaction is alpha-D-glucose 1-phosphate + ATP + H(+) = ADP-alpha-D-glucose + diphosphate. It functions in the pathway glycan biosynthesis; glycogen biosynthesis. Its function is as follows. Involved in the biosynthesis of ADP-glucose, a building block required for the elongation reactions to produce glycogen. Catalyzes the reaction between ATP and alpha-D-glucose 1-phosphate (G1P) to produce pyrophosphate and ADP-Glc. In Bacillus licheniformis (strain ATCC 14580 / DSM 13 / JCM 2505 / CCUG 7422 / NBRC 12200 / NCIMB 9375 / NCTC 10341 / NRRL NRS-1264 / Gibson 46), this protein is Glucose-1-phosphate adenylyltransferase.